We begin with the raw amino-acid sequence, 250 residues long: Eukaryotic translation initiation factor 2 subunit 2 (250 aa).

The C4-type zinc finger occupies 193–217 (CHTCKSPETQLTKDTRLFFLQCTNC).

This sequence belongs to the eIF-2-beta/eIF-5 family. In terms of assembly, eukaryotic translation initiation factor 2 eIF2 is a heterotrimeric complex composed of an alpha, a beta and a gamma subunit.

It is found in the cytoplasm. It localises to the cytosol. Functionally, component of the eIF2 complex that functions in the early steps of protein synthesis by forming a ternary complex with GTP and initiator tRNA. This complex binds to a 40S ribosomal subunit, followed by mRNA binding to form a 43S pre-initiation complex (43S PIC). Junction of the 60S ribosomal subunit to form the 80S initiation complex is preceded by hydrolysis of the GTP bound to eIF2 and release of an eIF2-GDP binary complex. In order for eIF2 to recycle and catalyze another round of initiation, the GDP bound to eIF2 must exchange with GTP by way of a reaction catalyzed by eIF2B. The polypeptide is Eukaryotic translation initiation factor 2 subunit 2 (Caenorhabditis elegans).